The primary structure comprises 194 residues: Holliday junction branch migration complex subunit RuvA (194 aa).

The interval 1–63 (MFEYMKGMIV…EDEAHLYGFV (63 aa)) is domain I. The interval 64-142 (DKEELAMFKK…DSQVEYDQNF (79 aa)) is domain II. Residues 143 to 146 (FNHE) form a flexible linker region. The domain III stretch occupies residues 146-194 (ENKNNNEVVDALMALGYTKHEGEQAASAVRDTSLSTEEMIRKALNWLAR).

Belongs to the RuvA family. As to quaternary structure, homotetramer. Forms an RuvA(8)-RuvB(12)-Holliday junction (HJ) complex. HJ DNA is sandwiched between 2 RuvA tetramers; dsDNA enters through RuvA and exits via RuvB. An RuvB hexamer assembles on each DNA strand where it exits the tetramer. Each RuvB hexamer is contacted by two RuvA subunits (via domain III) on 2 adjacent RuvB subunits; this complex drives branch migration. In the full resolvosome a probable DNA-RuvA(4)-RuvB(12)-RuvC(2) complex forms which resolves the HJ.

The protein resides in the cytoplasm. In terms of biological role, the RuvA-RuvB-RuvC complex processes Holliday junction (HJ) DNA during genetic recombination and DNA repair, while the RuvA-RuvB complex plays an important role in the rescue of blocked DNA replication forks via replication fork reversal (RFR). RuvA specifically binds to HJ cruciform DNA, conferring on it an open structure. The RuvB hexamer acts as an ATP-dependent pump, pulling dsDNA into and through the RuvAB complex. HJ branch migration allows RuvC to scan DNA until it finds its consensus sequence, where it cleaves and resolves the cruciform DNA. In Alkaliphilus metalliredigens (strain QYMF), this protein is Holliday junction branch migration complex subunit RuvA.